Reading from the N-terminus, the 146-residue chain is Hemoglobin subunit beta-1 (146 aa).

One can recognise a Globin domain in the interval 2 to 146; it reads HWTAEEKQLI…VSHSLARRYH (145 aa). Heme b is bound by residues histidine 63 and histidine 92.

It belongs to the globin family. In terms of assembly, the major hemoglobin component (HbIII) is a tetramer of two alpha-2 chains and two beta-1 chains. Red blood cells.

Its function is as follows. Involved in oxygen transport from the lung to the various peripheral tissues. The sequence is that of Hemoglobin subunit beta-1 (HBB1) from Varanus albigularis (White-throated monitor).